Here is a 332-residue protein sequence, read N- to C-terminus: MMKKPVVIELAVVVLAAVVAGGYWWYQSRQDNGLTLYGNVDIRTVNLSFRVGGRVESLAVDEGDAIKAGQVLGELDHKPYEIALMQAKAGVSVAQAQYDLMLAGYRDEEIAQAAAAVKQAQAAYDYAQNFYNRQQGLWKSRTISANDLENARSSRDQAQATLKSAQDKLRQYRSGNREQDIAQAKASLEQAQAQLAQAELNLQDSTLIAPSDGTLLTRAVEPGTVLNEGGTVFTVSLTRPVWVRAYVDERYLDQAQPGRKVLLYTDGRPDKPYHGQIGFVSPTAEFTPKTVETPDLRTDLVYRLRIVVTDADDALRQGMPVTVQFGNEAGHE.

The signal sequence occupies residues 1-26; sequence MMKKPVVIELAVVVLAAVVAGGYWWY. The stretch at 108–209 forms a coiled coil; sequence EEIAQAAAAV…LNLQDSTLIA (102 aa).

This sequence belongs to the UPF0194 family.

It localises to the periplasm. This Shigella sonnei (strain Ss046) protein is UPF0194 membrane protein YbhG (ybhG).